We begin with the raw amino-acid sequence, 409 residues long: Tyrosine--tRNA ligase (409 aa).

Positions 54–63 (PTAPDIHLGH) match the 'HIGH' region motif. The short motif at 238–242 (KMSKS) is the 'KMSKS' region element. Residue K241 coordinates ATP. The region spanning 347–407 (MGILHVLRAS…GKRKFARVNL (61 aa)) is the S4 RNA-binding domain.

Belongs to the class-I aminoacyl-tRNA synthetase family. TyrS type 2 subfamily. As to quaternary structure, homodimer.

Its subcellular location is the cytoplasm. The enzyme catalyses tRNA(Tyr) + L-tyrosine + ATP = L-tyrosyl-tRNA(Tyr) + AMP + diphosphate + H(+). Functionally, catalyzes the attachment of tyrosine to tRNA(Tyr) in a two-step reaction: tyrosine is first activated by ATP to form Tyr-AMP and then transferred to the acceptor end of tRNA(Tyr). The protein is Tyrosine--tRNA ligase of Bordetella avium (strain 197N).